The sequence spans 387 residues: 2-alkyl-3-oxoalkanoate reductase (387 aa).

Catalysis depends on Tyr-190, which acts as the Proton acceptor. Lys-194 contacts NADP(+).

Belongs to the 3-beta-HSD family.

It carries out the reaction a (2R,3S)-2-alkyl-3-hydroxyalkanoate + NADP(+) = an (R)-2-alkyl-3-oxoalkanoate + NADPH + H(+). Involved in olefin biosynthesis. Catalyzes the reversible stereospecific NADPH-dependent reduction of 2-alkyl-3-oxoalkanoic acids to 2-alkyl-3-hydroxyalkanoic acids. The S.oneidensis oleABCD genes produce 3,6,9,12,15,19,22,25,28-hentriacontanonaene, which may aid the cells in adapting to a sudden drop in temperature. The chain is 2-alkyl-3-oxoalkanoate reductase from Shewanella oneidensis (strain ATCC 700550 / JCM 31522 / CIP 106686 / LMG 19005 / NCIMB 14063 / MR-1).